We begin with the raw amino-acid sequence, 291 residues long: MEVNGTANILSSAFLAVEFVDSFLPQNPLQEPFKHAWNHMLQNYTKFQIATWGSLIVHELIYFLFCLPGFIFQFLPFMQKYKIQPDKPETWEKQWKCFKMLLFNHFCIQLPLICGTYYFTEFFSIPYDWDTMPRWPFLLAQCFGCAVIEDTWHYFLHRALHHRRIYKYIHKVHHDFTSPFGMQAEYAHPLETLILGAGFFIGTMVFCNHMILLWAWVTFRLLETIDVHSGYDIPLNPLHLIPFYAGARFHDFHHMNFVGNYGSTFTWWDRLFDTDSQFNKHYSHHKTAKSD.

2 helical membrane passes run Leu-55 to Leu-75 and Met-100 to Thr-120. A Fatty acid hydroxylase domain is found at Cys-145–Thr-274. The short motif at His-157 to His-161 is the Histidine box-1 element. Positions His-170–His-174 match the Histidine box-2 motif. A helical membrane pass occupies residues Phe-199–Phe-219. The Histidine box-3 motif lies at Phe-249–Met-255.

It belongs to the sterol desaturase family. Fe cation is required as a cofactor.

It localises to the endoplasmic reticulum membrane. The enzyme catalyses 4,4-dimethyl-5alpha-cholest-7-en-3beta-ol + 6 Fe(II)-[cytochrome b5] + 3 O2 + 5 H(+) = 4alpha-carboxy-4beta-methyl-5alpha-cholest-7-ene-3beta-ol + 6 Fe(III)-[cytochrome b5] + 4 H2O. It participates in steroid biosynthesis; zymosterol biosynthesis; zymosterol from lanosterol: step 3/6. Catalyzes the first step in the removal of the two C-4 methyl groups of 4,4-dimethylzymosterol. The chain is Methylsterol monooxygenase 1 (msmo1) from Danio rerio (Zebrafish).